The chain runs to 158 residues: MGIGNENKGFITASADALINWVRTGSLWPVTTGLACCAVEMMHAGAARYDLDRFGIVFRPSPRQSDVLIVAGTLCNKMAPALRQVYDQMPDPKWVISMGSCANGGGYYHYSYSVVRGCDRIIPVDIYVPGCPPTAEALVYGIIQLQNKIIRKDTIARK.

[4Fe-4S] cluster is bound by residues C36, C37, C101, and C131.

This sequence belongs to the complex I 20 kDa subunit family. As to quaternary structure, NDH-1 is composed of 14 different subunits. Subunits NuoB, C, D, E, F, and G constitute the peripheral sector of the complex. [4Fe-4S] cluster serves as cofactor.

The protein localises to the cell inner membrane. It carries out the reaction a quinone + NADH + 5 H(+)(in) = a quinol + NAD(+) + 4 H(+)(out). In terms of biological role, NDH-1 shuttles electrons from NADH, via FMN and iron-sulfur (Fe-S) centers, to quinones in the respiratory chain. The immediate electron acceptor for the enzyme in this species is believed to be ubiquinone. Couples the redox reaction to proton translocation (for every two electrons transferred, four hydrogen ions are translocated across the cytoplasmic membrane), and thus conserves the redox energy in a proton gradient. The polypeptide is NADH-quinone oxidoreductase subunit B (Francisella philomiragia subsp. philomiragia (strain ATCC 25017 / CCUG 19701 / FSC 153 / O#319-036)).